The sequence spans 505 residues: Prenylcysteine oxidase 1 (505 aa).

The first 28 residues, 1-28 (MGRFAAALVGSLFWLGLLLCGLGSLASA), serve as a signal peptide directing secretion. N196, N323, and N353 each carry an N-linked (GlcNAc...) asparagine glycan.

It belongs to the prenylcysteine oxidase family. FAD is required as a cofactor. Highly expressed in the liver, kidney, heart and brain.

It is found in the lysosome. The catalysed reaction is an S-polyprenyl-L-cysteine + O2 + H2O = a polyprenal + L-cysteine + H2O2. It catalyses the reaction S-(2E,6E)-farnesyl-L-cysteine + O2 + H2O = (2E,6E)-farnesal + L-cysteine + H2O2. The enzyme catalyses [(2E,6E,10E)-geranylgeranyl]-L-cysteine + O2 + H2O = (2E,6E,10E)-geranylgeranial + L-cysteine + H2O2. Functionally, prenylcysteine oxidase that cleaves the thioether bond of prenyl-L-cysteines, such as farnesylcysteine and geranylgeranylcysteine. Only active against free prenylcysteines and not prenylcysteine residues within prenylated proteins or peptides. Involved in the final step in the degradation of prenylated proteins, by degrading prenylcysteines after the protein has been degraded. This chain is Prenylcysteine oxidase 1, found in Mus musculus (Mouse).